The chain runs to 1149 residues: FH2 domain-containing protein 1 (1149 aa).

4 disordered regions span residues 18 to 79 (LATA…PPPG), 464 to 540 (NHDR…SRLS), 554 to 660 (ESAT…PLLP), and 681 to 1149 (SPKS…PLQK). Composition is skewed to pro residues over residues 33-48 (ASPPPPPPPPPPPPCP) and 56-79 (PSPPPPLPPPLPGGPPIPPPPPPG). Residues 88–483 (GYSSLGKKKR…QLQRQKEMEQ (396 aa)) enclose the FH2 domain. Positions 464 to 485 (NHDREEQERKQLQRQKEMEQKR) are enriched in basic and acidic residues. Residues 486-504 (YSWSTGELGSFGRSSSEND) show a composition bias toward polar residues. Position 501 is a phosphoserine (S501). Residues 522–532 (PRPNSPSYRPP) are compositionally biased toward low complexity. Composition is skewed to polar residues over residues 554–575 (ESATSSPEDPNKFNSLPRSSPR) and 591–604 (SHGPNFTHEPQASK). 2 positions are modified to phosphoserine: S645 and S655. Residues 681-693 (SPKSLEEGSQLTL) are compositionally biased toward polar residues. Residues 784-795 (MDSRAGGDKQEE) are compositionally biased toward basic and acidic residues. The segment covering 801–822 (GSVSSGAGEAGSSQVSSNSVSS) has biased composition (low complexity). Residues 844–856 (PKDRPSRGKDAIA) show a composition bias toward basic and acidic residues. Positions 926–947 (ETPSSTDTPLSRRSSVRGTSDT) are enriched in polar residues. An MTBD; microtubule-binding domain region spans residues 960 to 1086 (EEPRLPRSSG…VKGGSEDSAS (127 aa)). Over residues 965-974 (PRSSGSISGR) the composition is skewed to low complexity. Polar residues-rich tracts occupy residues 1042-1052 (ARNTVASSSRS) and 1064-1074 (TGLTRTVSQRQ). A compositionally biased stretch (basic and acidic residues) spans 1123 to 1134 (GTTERSSLRLKD).

Interacts with CEP170. Brain, heart and lung (at protein level).

The protein resides in the golgi apparatus. The protein localises to the cell projection. It localises to the cilium. Functionally, microtubule-associated formin which regulates both actin and microtubule dynamics. Induces microtubule acetylation and stabilization and actin stress fiber formation. Regulates Golgi ribbon formation. Required for normal cilia assembly. Early in cilia assembly, may assist in the maturation and positioning of the centrosome/basal body, and once cilia assembly has initiated, may also promote cilia elongation by inhibiting disassembly. This is FH2 domain-containing protein 1 (Fhdc1) from Mus musculus (Mouse).